The primary structure comprises 505 residues: Trans-cinnamate 4-monooxygenase (505 aa).

A helical membrane pass occupies residues 3–23 (LLLLEKTLLALFLAAITAITI). (E)-cinnamate-binding positions include 213-218 (RSRLAQ) and A306. C447 contributes to the heme binding site.

The protein belongs to the cytochrome P450 family. It depends on heme as a cofactor.

It is found in the membrane. It carries out the reaction (E)-cinnamate + reduced [NADPH--hemoprotein reductase] + O2 = (E)-4-coumarate + oxidized [NADPH--hemoprotein reductase] + H2O + H(+). It functions in the pathway phenylpropanoid metabolism; trans-4-coumarate biosynthesis; trans-4-coumarate from trans-cinnamate: step 1/1. Functionally, catalyzes the first oxidative step of the phenylpropanoid pathway in higher plants by transforming trans-cinnamate into p-coumarate. The compounds formed by this pathway are essential components for lignification, pollination, and defense against ultraviolet light, predators and pathogens. The polypeptide is Trans-cinnamate 4-monooxygenase (CYP73A9) (Pisum sativum (Garden pea)).